Consider the following 150-residue polypeptide: Transcriptional repressor NrdR (150 aa).

Residues cysteine 3–cysteine 34 fold into a zinc finger. An ATP-cone domain is found at proline 49–glutamate 139.

The protein belongs to the NrdR family. Requires Zn(2+) as cofactor.

Its function is as follows. Negatively regulates transcription of bacterial ribonucleotide reductase nrd genes and operons by binding to NrdR-boxes. The protein is Transcriptional repressor NrdR of Geobacter sulfurreducens (strain ATCC 51573 / DSM 12127 / PCA).